A 698-amino-acid polypeptide reads, in one-letter code: MKKRHLLSLLALGISTACYGETYPAPIGPSQSDFGGVGLLQTPTARMAREGELSLNYRDNDQYRYYSASVQLFPWLETTLRYTDVRTRQYSSVEAFSGDQTYKDKAFDLKLRLWEESYWLPQVAVGARDIGGTGLFDAEYLVASKAWGPFDFTLGLGWGYLGTSGNVKNPLCSASDKYCYRDNSYKQAGSIDGSQMFHGPASLFGGVEYQTPWQPLRLKLEYEGNNYQQDFAGKLEQKSKFNVGAIYRVTDWADVNLSYERGNTFMFGVTLRTNFNDLRPSYNDNARPQYQPQPQDAILQHSVVANQLTLLKYNAGLADPQIQAKGDTLYVTGEQVKYRDSREGIIRANRIVMNDLPDGIKTIRITENRLNMPQVTTETDVASLKNHLAGEPLGHETTLAQKRVEPVVPQSTEQGWYIDKSRFDFHIDPVLNQSVGGPENFYMYQLGVMGTADLWLTDHLLTTGSLFANLANNYDKFNYTNPPQDSHLPRVRTHVREYVQNDVYVNNLQANYFQHLGNGFYGQVYGGYLETMFGGAGAEVLYRPLDSNWAFGLDANYVKQRDWRSAKDMMKFTDYSVKTGHLTAYWTPSFAQDVLVKASVGQYLAGDKGGTLEIAKRFDSGVVVGGYATITNVSKEEYGEGDFTKGVYVSVPLDLFSSGPTRSRAAIGWTPLTRDGGQQLGRKFQLYDMTSDRSVNFR.

The signal sequence occupies residues 1-17; it reads MKKRHLLSLLALGISTA. Cys18 is lipidated: N-palmitoyl cysteine. Cys18 carries S-diacylglycerol cysteine lipidation.

To E.coli YmcA.

It is found in the cell membrane. This is an uncharacterized protein from Escherichia coli (strain K12).